A 102-amino-acid polypeptide reads, in one-letter code: MACARPLTGRTLPADESPCLTLILEPVSGEAAKNSTPVVVDKPGKPPPKRHRRQYNVTVSCNDCDKRLNFSVKTTCSTILTLQQLLTEDLDFLCSFCEAKNG.

Residues M1–T36 are E7 terminal domain. The segment at C61–C97 is a zinc-finger region. Positions I79 to T87 match the Nuclear export signal motif.

Belongs to the papillomaviridae E7 protein family. As to quaternary structure, homodimer. Homooligomer. Interacts with host RB1; this interaction induces dissociation of RB1-E2F1 complex thereby disrupting RB1 activity. Interacts with host EP300; this interaction represses EP300 transcriptional activity. Interacts with protein E2; this interaction inhibits E7 oncogenic activity. Interacts with host TMEM173/STING; this interaction impairs the ability of TMEM173/STING to sense cytosolic DNA and promote the production of type I interferon (IFN-alpha and IFN-beta). Highly phosphorylated.

Its subcellular location is the host cytoplasm. It is found in the host nucleus. Functionally, plays a role in viral genome replication by driving entry of quiescent cells into the cell cycle. Stimulation of progression from G1 to S phase allows the virus to efficiently use the cellular DNA replicating machinery to achieve viral genome replication. E7 protein has both transforming and trans-activating activities. Induces the disassembly of the E2F1 transcription factor from RB1, with subsequent transcriptional activation of E2F1-regulated S-phase genes. Interferes with host histone deacetylation mediated by HDAC1 and HDAC2, leading to transcription activation. Also plays a role in the inhibition of both antiviral and antiproliferative functions of host interferon alpha. Interaction with host TMEM173/STING impairs the ability of TMEM173/STING to sense cytosolic DNA and promote the production of type I interferon (IFN-alpha and IFN-beta). This is Protein E7 from Odocoileus virginianus (White-tailed deer).